The chain runs to 257 residues: Snake venom serine protease serpentokallikrein-2 (257 aa).

The signal sequence occupies residues 1 to 18 (MVLIRVLANLLILQLSYA). The propeptide occupies 19 to 24 (QKSSEL). The 224-residue stretch at 25 to 248 (VIGGDECNIN…HLDWIKGIIA (224 aa)) folds into the Peptidase S1 domain. Cystine bridges form between C31-C162, C49-C65, C97-C255, C141-C209, C173-C188, and C199-C224. The active-site Charge relay system is the H64. N-linked (GlcNAc...) asparagine glycosylation is present at N102. The active-site Charge relay system is D109. S203 serves as the catalytic Charge relay system.

It belongs to the peptidase S1 family. Snake venom subfamily. In terms of assembly, monomer. Expressed by the venom gland.

The protein resides in the secreted. Snake venom serine protease that may act in the hemostasis system of the prey. The chain is Snake venom serine protease serpentokallikrein-2 from Protobothrops mucrosquamatus (Taiwan habu).